The sequence spans 478 residues: Solute carrier family 49 member 4 (478 aa).

The interval 1–27 is disordered; it reads MGSGWSSEEEERQPLLGPGLGPAPGAA. Residues 1–51 lie on the Cytoplasmic side of the membrane; it reads MGSGWSSEEEERQPLLGPGLGPAPGAARRGREATAVLPAAGPNPGRVYGRR. The short motif at 15 to 16 is the Di-leucine motif; mediates lysosomal localization element; that stretch reads LL. Residues 52–72 traverse the membrane as a helical segment; the sequence is WLVLLLFSLLAFAQGLVWNTW. The Lumenal segment spans residues 73-89; that stretch reads GPIQNSARQAYGFSGWD. The chain crosses the membrane as a helical span at residues 90–110; it reads IALLVLWGPIGFLPCFAFMWL. Residues 111–117 lie on the Cytoplasmic side of the membrane; that stretch reads LDKRGLR. A helical transmembrane segment spans residues 118–138; sequence VTVLLTSFLMVLGTGLRCIPV. Topologically, residues 139 to 152 are lumenal; it reads SDLALKKRLIHGGQ. The chain crosses the membrane as a helical span at residues 153-173; sequence ILNGLAGPTVMNAAPFLSTTW. The Cytoplasmic portion of the chain corresponds to 174–184; sequence FSADERATATA. The helical transmembrane segment at 185 to 205 threads the bilayer; the sequence is IASMLSYLGGACAFLVGPLVV. The Lumenal segment spans residues 206 to 229; sequence PAPNGTAPLLAAESSRAHIKDRIE. The N-linked (GlcNAc...) asparagine glycan is linked to Asn209. Residues 230-250 traverse the membrane as a helical segment; the sequence is TVLYAEFGVVCLIFSATLAYF. Residues 251 to 281 are Cytoplasmic-facing; sequence PPRPPLPPSVAAASQRLSYRRSFCRLLSNLR. A helical membrane pass occupies residues 282–302; that stretch reads FLMIALAYAIPLGVFAGWSGV. Residues 303 to 314 are Lumenal-facing; it reads LDLILTPVHVSQ. The chain crosses the membrane as a helical span at residues 315 to 335; it reads VDAGWIGFWSIVGGCVVGIAM. The Cytoplasmic segment spans residues 336-347; the sequence is ARFADFIRGMLK. The helical transmembrane segment at 348–368 threads the bilayer; that stretch reads LILLLLFSGATLSSTWFTLTC. Topologically, residues 369–384 are lumenal; the sequence is LNSITHLPLTTVTLYA. A helical transmembrane segment spans residues 385-405; the sequence is SCILLGVFLNSSVPIFFELFV. Over 406–414 the chain is Cytoplasmic; that stretch reads ETVYPVPEG. Residues 415–435 traverse the membrane as a helical segment; the sequence is ITCGVVTFLSNMFMGVLLFFV. The Lumenal segment spans residues 436–442; the sequence is TFYHTEL. The chain crosses the membrane as a helical span at residues 443 to 463; it reads SWFNWCLPGSCLLSLLLILCF. The Cytoplasmic segment spans residues 464-478; it reads RESYDRLYLDVVVSV.

This sequence belongs to the major facilitator superfamily. In terms of processing, cleaved in lysosomes by cathepsin L between Leu-214 and Ala-261, generating a N-glycosylated N-terminal and a non-glycosylated C-terminal fragment.

It is found in the lysosome membrane. It carries out the reaction pyridoxine(out) + n H(+)(out) = pyridoxine(in) + n H(+)(in). Its function is as follows. Mediates H(+)-dependent pyridoxine transport. This Mus musculus (Mouse) protein is Solute carrier family 49 member 4 (Slc49a4).